The following is a 210-amino-acid chain: Adenylate kinase (210 aa).

Position 10–15 (10–15) interacts with ATP; it reads GSGKGT. Residues 30–59 are NMP; it reads STGDLFRANISNATPLGKEIKQIVENGQLV. Residues threonine 31, arginine 36, 57–59, 85–88, and glutamine 92 each bind AMP; these read QLV and GFPR. The LID stretch occupies residues 121–158; the sequence is GRRICQSCGGIFNIYTLPTKEKGICDLCKGSLYQRKDD. Arginine 122 contributes to the ATP binding site. Residues cysteine 125 and cysteine 128 each contribute to the Zn(2+) site. Residue 131 to 132 participates in ATP binding; that stretch reads IF. The Zn(2+) site is built by cysteine 145 and cysteine 148. Positions 155 and 166 each coordinate AMP. Lysine 194 contacts ATP.

It belongs to the adenylate kinase family. As to quaternary structure, monomer.

It localises to the cytoplasm. It carries out the reaction AMP + ATP = 2 ADP. The protein operates within purine metabolism; AMP biosynthesis via salvage pathway; AMP from ADP: step 1/1. Functionally, catalyzes the reversible transfer of the terminal phosphate group between ATP and AMP. Plays an important role in cellular energy homeostasis and in adenine nucleotide metabolism. The polypeptide is Adenylate kinase (Borrelia turicatae (strain 91E135)).